The primary structure comprises 1191 residues: Puratrophin-1 (1191 aa).

Disordered stretches follow at residues 1 to 152 (MERP…DPVG) and 707 to 728 (AGGG…SDPR). Ser-64 carries the post-translational modification Phosphoserine. A compositionally biased stretch (polar residues) spans 111–120 (SHLSLAQGES). Residues 732 to 908 (RLQLVLAEMV…HFQLRHGNDL (177 aa)) form the DH domain. Positions 920-1027 (NLKEQGQLVR…WTADISHLLW (108 aa)) constitute a PH domain. The interval 1150–1176 (SLTAEDSEISSQCPSASGSSGSDSSCV) is disordered. Residues 1159–1176 (SSQCPSASGSSGSDSSCV) are compositionally biased toward low complexity.

Expressed in kidney, Leydig cells in the testis, epithelial cells in the prostate gland and Langerhans islet in the pancreas. Isoform 1 and isoform 3 are strongly expressed in Purkinje cells and to a lower extent in other neurons (at protein level). Widely expressed at low levels. More strongly expressed in testis and pancreas.

Functionally, possible role in intracellular signaling and cytoskeleton dynamics at the Golgi. The sequence is that of Puratrophin-1 (PLEKHG4) from Homo sapiens (Human).